The chain runs to 215 residues: [PSI+] inducibility protein 3 (215 aa).

Ser-2 bears the N-acetylserine mark. Residues Ser-52 and Ser-55 each carry the phosphoserine modification. Residues 54–113 (ASLEYVEALYQFDPQQDGDLGLKPGDKVQLLEKLSPEWYKGSCNGRTGIFPANYVKPAFS) enclose the SH3 domain. Residue Lys-80 forms a Glycyl lysine isopeptide (Lys-Gly) (interchain with G-Cter in ubiquitin) linkage. The disordered stretch occupies residues 114 to 189 (GSNGPSNLPP…HQSSHSHLKS (76 aa)). Positions 124–127 (PPQY) match the PY motif motif.

The protein belongs to the LSB1 family. Interacts with LAS17, RSP5 and SUP35. Ubiquitinated by RSP5. Ubiquitination reduces the protein abundance and its prion-inducing ability.

It localises to the cytoplasm. The protein resides in the nucleus. The protein localises to the cytoskeleton. It is found in the actin patch. Its function is as follows. Overproduction promotes the de novo induction of the [PSI+] prion form of SUP35. The prion-inducing effect depends on the association with the actin cytoskeleton. Also implicated in prion maintenance during heat stress. This is [PSI+] inducibility protein 3 (PIN3) from Saccharomyces cerevisiae (strain ATCC 204508 / S288c) (Baker's yeast).